The chain runs to 126 residues: Aspartate 1-decarboxylase (126 aa).

Serine 25 functions as the Schiff-base intermediate with substrate; via pyruvic acid in the catalytic mechanism. Serine 25 carries the pyruvic acid (Ser) modification. Threonine 57 contacts substrate. Tyrosine 58 (proton donor) is an active-site residue. 73–75 provides a ligand contact to substrate; that stretch reads GAA.

This sequence belongs to the PanD family. In terms of assembly, heterooctamer of four alpha and four beta subunits. Requires pyruvate as cofactor. Post-translationally, is synthesized initially as an inactive proenzyme, which is activated by self-cleavage at a specific serine bond to produce a beta-subunit with a hydroxyl group at its C-terminus and an alpha-subunit with a pyruvoyl group at its N-terminus.

It localises to the cytoplasm. It catalyses the reaction L-aspartate + H(+) = beta-alanine + CO2. It participates in cofactor biosynthesis; (R)-pantothenate biosynthesis; beta-alanine from L-aspartate: step 1/1. In terms of biological role, catalyzes the pyruvoyl-dependent decarboxylation of aspartate to produce beta-alanine. The polypeptide is Aspartate 1-decarboxylase (Citrobacter koseri (strain ATCC BAA-895 / CDC 4225-83 / SGSC4696)).